The sequence spans 232 residues: Flagellar L-ring protein (232 aa).

Positions 1-15 (MKKVLFYVLPFAFFG) are cleaved as a signal peptide. A lipid anchor (N-palmitoyl cysteine) is attached at Cys16. The S-diacylglycerol cysteine moiety is linked to residue Cys16.

Belongs to the FlgH family. In terms of assembly, the basal body constitutes a major portion of the flagellar organelle and consists of four rings (L,P,S, and M) mounted on a central rod.

It localises to the cell outer membrane. The protein localises to the bacterial flagellum basal body. Assembles around the rod to form the L-ring and probably protects the motor/basal body from shearing forces during rotation. In Campylobacter jejuni subsp. doylei (strain ATCC BAA-1458 / RM4099 / 269.97), this protein is Flagellar L-ring protein.